Here is a 256-residue protein sequence, read N- to C-terminus: MRSRWIWRFLRPDGGGIRWTSTPHGRLSPALRRGFLTTTTKSDYDRRPVDITPLEQRKLTFDTHALVQDLETHGFDKTQAQTIVSVLSTLSNVSLDTIYKEMVTKAQQEITVQQLMAHLDSIRKDMVILEKSEFANLRAENEKMKIELDQVKQQLTNETSRIRADNKLDINLERSRVTDMFTDQEKQLIEATNEFAKKDTQTKSIISETSNKIDTEIASLKTLMESSKLETIRYLAASVFTCLAIALGFYRFWKEN.

Residues 1 to 42 (MRSRWIWRFLRPDGGGIRWTSTPHGRLSPALRRGFLTTTTKS) constitute a mitochondrion transit peptide. The stretch at 129–167 (LEKSEFANLRAENEKMKIELDQVKQQLTNETSRIRADNK) forms a coiled coil. The helical transmembrane segment at 231 to 253 (TIRYLAASVFTCLAIALGFYRFW) threads the bilayer.

The protein belongs to the CCDC90 family. In terms of assembly, interacts with MCU.

It localises to the mitochondrion membrane. This chain is Coiled-coil domain-containing protein 90B, mitochondrial (Ccdc90b), found in Mus musculus (Mouse).